The primary structure comprises 501 residues: Aldehyde dehydrogenase 1A1 (501 aa).

The residue at position 2 (S2) is an N-acetylserine. N6-acetyllysine is present on residues K91 and K128. Residues 167–170 (IPWN), 193–196 (KPAE), 226–227 (GP), and 246–247 (GS) contribute to the NAD(+) site. K252 is modified (N6-acetyllysine). The Proton acceptor role is filled by E269. NAD(+) is bound at residue 269–271 (ELG). The Nucleophile role is filled by C303. The interval 336-501 (LNSGINQGPQ…VAIKISQKNS (166 aa)) is mediates interaction with PRMT3. 349-353 (EQHDK) is a binding site for NAD(+). N6-acetyllysine is present on residues K353 and K367. 400-402 (EIF) contributes to the NAD(+) binding site. The residue at position 410 (K410) is an N6-acetyllysine. S413 bears the Phosphoserine mark. N6-acetyllysine occurs at positions 419, 435, and 495.

It belongs to the aldehyde dehydrogenase family. Homotetramer. Interacts with PRMT3; the interaction is direct, inhibits ALDH1A1 aldehyde dehydrogenase activity and is independent of the methyltransferase activity of PRMT3. In terms of processing, the N-terminus is blocked most probably by acetylation.

Its subcellular location is the cytoplasm. It is found in the cytosol. The protein localises to the cell projection. The protein resides in the axon. It carries out the reaction an aldehyde + NAD(+) + H2O = a carboxylate + NADH + 2 H(+). It catalyses the reaction all-trans-retinal + NAD(+) + H2O = all-trans-retinoate + NADH + 2 H(+). The catalysed reaction is 9-cis-retinal + NAD(+) + H2O = 9-cis-retinoate + NADH + 2 H(+). The enzyme catalyses 11-cis-retinal + NAD(+) + H2O = 11-cis-retinoate + NADH + 2 H(+). It carries out the reaction 13-cis-retinal + NAD(+) + H2O = 13-cis-retinoate + NADH + 2 H(+). It catalyses the reaction 3-deoxyglucosone + NAD(+) + H2O = 2-dehydro-3-deoxy-D-gluconate + NADH + 2 H(+). The catalysed reaction is (E)-4-hydroxynon-2-enal + NAD(+) + H2O = (E)-4-hydroxynon-2-enoate + NADH + 2 H(+). The enzyme catalyses malonaldehyde + NAD(+) + H2O = 3-oxopropanoate + NADH + 2 H(+). It carries out the reaction hexanal + NAD(+) + H2O = hexanoate + NADH + 2 H(+). It catalyses the reaction propanal + NAD(+) + H2O = propanoate + NADH + 2 H(+). The catalysed reaction is acetaldehyde + NAD(+) + H2O = acetate + NADH + 2 H(+). The enzyme catalyses benzaldehyde + NAD(+) + H2O = benzoate + NADH + 2 H(+). It carries out the reaction 4-aminobutanal + NAD(+) + H2O = 4-aminobutanoate + NADH + 2 H(+). The protein operates within cofactor metabolism; retinol metabolism. Cytosolic dehydrogenase that catalyzes the irreversible oxidation of a wide range of aldehydes to their corresponding carboxylic acid. Functions downstream of retinol dehydrogenases and catalyzes the oxidation of retinaldehyde into retinoic acid, the second step in the oxidation of retinol/vitamin A into retinoic acid. This pathway is crucial to control the levels of retinol and retinoic acid, two important molecules which excess can be teratogenic and cytotoxic. Also oxidizes aldehydes resulting from lipid peroxidation like (E)-4-hydroxynon-2-enal/HNE, malonaldehyde and hexanal that form protein adducts and are highly cytotoxic. By participating for instance to the clearance of (E)-4-hydroxynon-2-enal/HNE in the lens epithelium prevents the formation of HNE-protein adducts and lens opacification. Also functions downstream of fructosamine-3-kinase in the fructosamine degradation pathway by catalyzing the oxidation of 3-deoxyglucosone, the carbohydrate product of fructosamine 3-phosphate decomposition, which is itself a potent glycating agent that may react with lysine and arginine side-chains of proteins. Also has an aminobutyraldehyde dehydrogenase activity and is probably part of an alternative pathway for the biosynthesis of GABA/4-aminobutanoate in midbrain, thereby playing a role in GABAergic synaptic transmission. This Mesocricetus auratus (Golden hamster) protein is Aldehyde dehydrogenase 1A1.